A 211-amino-acid polypeptide reads, in one-letter code: Proline-rich 33 kDa extensin-related protein (211 aa).

Positions 1–14 are cleaved as a signal peptide; the sequence is AILGVAIFAAPSLA. 2 stretches are compositionally biased toward pro residues: residues 25-59 and 82-93; these read PPVY…PVHK and HKPPVYKPPVQK. The tract at residues 25–211 is disordered; sequence PPVYTPPVHK…RHPPVENTGN (187 aa). 2 stretches are compositionally biased toward basic residues: residues 101-111 and 127-139; these read PVHKPPIHKPP and PIHK…RPPV. 2 stretches are compositionally biased toward basic and acidic residues: residues 142 to 159 and 167 to 177; these read PPTE…EHKP and KTEKPVPEHKP. Residues 179-198 are compositionally biased toward pro residues; it reads HLPPIVVRPPPTHKPNPPYG.

It belongs to the plant proline-rich protein superfamily. ENOD12 family.

It is found in the secreted. The protein localises to the cell wall. The polypeptide is Proline-rich 33 kDa extensin-related protein (Daucus carota (Wild carrot)).